Reading from the N-terminus, the 35-residue chain is MSDIN-like toxin proprotein 6 (35 aa).

Residues 1–10 constitute a propeptide that is removed on maturation; it reads MSDINGTRLP. Residues 11–20 constitute a cross-link (cyclopeptide (Ile-Pro)); the sequence is IPGLIPLGIP. The propeptide occupies 21-35; sequence CVSDDVNPTLTRGER.

The protein belongs to the MSDIN fungal toxin family. In terms of processing, processed by the macrocyclase-peptidase enzyme POPB to yield a toxic cyclic decapeptide. POPB first removes 10 residues from the N-terminus. Conformational trapping of the remaining peptide forces the enzyme to release this intermediate rather than proceed to macrocyclization. The enzyme rebinds the remaining peptide in a different conformation and catalyzes macrocyclization of the N-terminal 10 residues.

In terms of biological role, probable toxin that belongs to the MSDIN-like toxin family responsible for a large number of food poisoning cases and deaths. This is MSDIN-like toxin proprotein 6 from Amanita bisporigera (Destroying angel).